Consider the following 512-residue polypeptide: 2-isopropylmalate synthase (512 aa).

The 263-residue stretch at 5–267 (VVIFDTTLRD…ETSINKSEIY (263 aa)) folds into the Pyruvate carboxyltransferase domain. Aspartate 14, histidine 202, histidine 204, and asparagine 238 together coordinate Mn(2+). The tract at residues 391-512 (SLEYLHITSG…LPKAKTERAV (122 aa)) is regulatory domain.

It belongs to the alpha-IPM synthase/homocitrate synthase family. LeuA type 1 subfamily. Homodimer. Requires Mn(2+) as cofactor.

The protein resides in the cytoplasm. The catalysed reaction is 3-methyl-2-oxobutanoate + acetyl-CoA + H2O = (2S)-2-isopropylmalate + CoA + H(+). The protein operates within amino-acid biosynthesis; L-leucine biosynthesis; L-leucine from 3-methyl-2-oxobutanoate: step 1/4. Functionally, catalyzes the condensation of the acetyl group of acetyl-CoA with 3-methyl-2-oxobutanoate (2-ketoisovalerate) to form 3-carboxy-3-hydroxy-4-methylpentanoate (2-isopropylmalate). This chain is 2-isopropylmalate synthase, found in Heliobacterium modesticaldum (strain ATCC 51547 / Ice1).